Reading from the N-terminus, the 360-residue chain is Holliday junction branch migration complex subunit RuvB (360 aa).

The large ATPase domain (RuvB-L) stretch occupies residues 4 to 196 (HEEDLDQAEE…FGFTAHLEFY (193 aa)). ATP-binding positions include L35, R36, G77, K80, T81, T82, 143 to 145 (EDF), R186, Y196, and R233. Position 81 (T81) interacts with Mg(2+). Residues 197 to 267 (EPDELDLIVQ…VAQDALDLYE (71 aa)) form a small ATPAse domain (RuvB-S) region. Positions 270–360 (QLGLDRLDRG…PESDPPLFED (91 aa)) are head domain (RuvB-H). DNA-binding residues include R306, R325, and R330.

Belongs to the RuvB family. As to quaternary structure, homohexamer. Forms an RuvA(8)-RuvB(12)-Holliday junction (HJ) complex. HJ DNA is sandwiched between 2 RuvA tetramers; dsDNA enters through RuvA and exits via RuvB. An RuvB hexamer assembles on each DNA strand where it exits the tetramer. Each RuvB hexamer is contacted by two RuvA subunits (via domain III) on 2 adjacent RuvB subunits; this complex drives branch migration. In the full resolvosome a probable DNA-RuvA(4)-RuvB(12)-RuvC(2) complex forms which resolves the HJ.

It localises to the cytoplasm. It carries out the reaction ATP + H2O = ADP + phosphate + H(+). The RuvA-RuvB-RuvC complex processes Holliday junction (HJ) DNA during genetic recombination and DNA repair, while the RuvA-RuvB complex plays an important role in the rescue of blocked DNA replication forks via replication fork reversal (RFR). RuvA specifically binds to HJ cruciform DNA, conferring on it an open structure. The RuvB hexamer acts as an ATP-dependent pump, pulling dsDNA into and through the RuvAB complex. RuvB forms 2 homohexamers on either side of HJ DNA bound by 1 or 2 RuvA tetramers; 4 subunits per hexamer contact DNA at a time. Coordinated motions by a converter formed by DNA-disengaged RuvB subunits stimulates ATP hydrolysis and nucleotide exchange. Immobilization of the converter enables RuvB to convert the ATP-contained energy into a lever motion, pulling 2 nucleotides of DNA out of the RuvA tetramer per ATP hydrolyzed, thus driving DNA branch migration. The RuvB motors rotate together with the DNA substrate, which together with the progressing nucleotide cycle form the mechanistic basis for DNA recombination by continuous HJ branch migration. Branch migration allows RuvC to scan DNA until it finds its consensus sequence, where it cleaves and resolves cruciform DNA. In Nocardioides sp. (strain ATCC BAA-499 / JS614), this protein is Holliday junction branch migration complex subunit RuvB.